The primary structure comprises 149 residues: Transcriptional repressor NrdR (149 aa).

A zinc finger spans residues 3–34; sequence CPFCSATDTKVIDSRLVADGHQVRRRRECVQC. The 91-residue stretch at 49-139 folds into the ATP-cone domain; that stretch reads PRVVKQDGSR…VYRAFEDVSE (91 aa).

Belongs to the NrdR family. Zn(2+) serves as cofactor.

In terms of biological role, negatively regulates transcription of bacterial ribonucleotide reductase nrd genes and operons by binding to NrdR-boxes. The chain is Transcriptional repressor NrdR from Shewanella piezotolerans (strain WP3 / JCM 13877).